Here is a 504-residue protein sequence, read N- to C-terminus: Histidine--tRNA ligase (504 aa).

This sequence belongs to the class-II aminoacyl-tRNA synthetase family. In terms of assembly, homodimer.

The protein resides in the cytoplasm. It carries out the reaction tRNA(His) + L-histidine + ATP = L-histidyl-tRNA(His) + AMP + diphosphate + H(+). This is Histidine--tRNA ligase from Rhizobium rhizogenes (strain K84 / ATCC BAA-868) (Agrobacterium radiobacter).